An 869-amino-acid polypeptide reads, in one-letter code: Ribonucleoside-diphosphate reductase large chain 2 (869 aa).

The ATP-cone domain occupies 1–92; the sequence is MYVIKRDGRK…ISNLHKQTTK (92 aa). Residues 5–6, 11–17, T53, and D57 contribute to the ATP site; these read KR and EPVQFDK. The GDP site is built by S202 and S217. A disulfide bridge links C218 with C443. DTTP-binding positions include 226–228, K243, R256, and 263–264; these read DSI and AG. At S227 the chain carries Phosphoserine. K387 is covalently cross-linked (Glycyl lysine isopeptide (Lys-Gly) (interchain with G-Cter in ubiquitin)). N426 is a GDP binding site. N426 functions as the Proton acceptor in the catalytic mechanism. C428 acts as the Cysteine radical intermediate in catalysis. GDP is bound by residues E430 and 608–611; that span reads TAST. The Proton acceptor role is filled by E430. The tract at residues 793–843 is disordered; it reads SALTESSDNEKDASPVPSEQSSVSSAMSNVKLEDSVAPAVPTETIKEDSDE. S806, S827, and S868 each carry phosphoserine. The segment covering 806–820 has biased composition (low complexity); that stretch reads SPVPSEQSSVSSAMS.

The protein belongs to the ribonucleoside diphosphate reductase large chain family. In terms of assembly, heterotetramer of two large (R1) and two small (R2) subunits. S.cerevisiae has two different R1 subunits (RNR1 and RNR3) and two different R2 subunits (RNR2 and RNR4). The functional form of the small subunits is a RNR2-RNR4 heterodimer, where RNR2 provides the iron-radical center and RNR4 is required for proper folding of RNR2 and assembly with the large subunits. Under normal growth conditions, the active form of the large subunits is a homodimer of the constitutively expressed RNR1. In damaged cells or cells arrested for DNA synthesis, the reductase consists of multiple species because of the association of the small subunits (RNR2-RNR4) with either the RNR1 homodimer or a heterodimer of RNR1 and the damage-inducible RNR3.

It localises to the cytoplasm. The catalysed reaction is a 2'-deoxyribonucleoside 5'-diphosphate + [thioredoxin]-disulfide + H2O = a ribonucleoside 5'-diphosphate + [thioredoxin]-dithiol. Under complex allosteric control mediated by deoxynucleoside triphosphates and ATP binding to separate specificity and activation sites on the large subunit. The type of nucleotide bound at the specificity site determines substrate preference. It seems probable that ATP makes the enzyme reduce CDP and UDP, dGTP favors ADP reduction and dTTP favors GDP reduction. Stimulated by ATP and inhibited by dATP binding to the activity site. Provides the precursors necessary for DNA synthesis. Catalyzes the biosynthesis of deoxyribonucleotides from the corresponding ribonucleotides. The protein is Ribonucleoside-diphosphate reductase large chain 2 (RNR3) of Saccharomyces cerevisiae (strain ATCC 204508 / S288c) (Baker's yeast).